The chain runs to 421 residues: UDP-N-acetylglucosamine 1-carboxyvinyltransferase (421 aa).

A phosphoenolpyruvate-binding site is contributed by 22–23 (KN). Arginine 93 serves as a coordination point for UDP-N-acetyl-alpha-D-glucosamine. Residue cysteine 117 is the Proton donor of the active site. 2-(S-cysteinyl)pyruvic acid O-phosphothioketal is present on cysteine 117. UDP-N-acetyl-alpha-D-glucosamine contacts are provided by residues 122-126 (RPVDL), aspartate 308, and isoleucine 330.

It belongs to the EPSP synthase family. MurA subfamily.

It localises to the cytoplasm. The enzyme catalyses phosphoenolpyruvate + UDP-N-acetyl-alpha-D-glucosamine = UDP-N-acetyl-3-O-(1-carboxyvinyl)-alpha-D-glucosamine + phosphate. Its pathway is cell wall biogenesis; peptidoglycan biosynthesis. Its function is as follows. Cell wall formation. Adds enolpyruvyl to UDP-N-acetylglucosamine. The polypeptide is UDP-N-acetylglucosamine 1-carboxyvinyltransferase (Pseudomonas entomophila (strain L48)).